The primary structure comprises 117 residues: Immunoglobulin heavy variable 5-51 (117 aa).

Positions 1–19 are cleaved as a signal peptide; that stretch reads MGSTAILALLLAVLQGVCA. The tract at residues 20–44 is framework-1; it reads EVQLVQSGAEVKKPGESLKISCKGS. The Ig-like domain occupies 20–117; that stretch reads EVQLVQSGAE…SDTAMYYCAR (98 aa). Cysteine 41 and cysteine 115 form a disulfide bridge. The segment at 45–52 is complementarity-determining-1; it reads GYSFTSYW. Positions 53–69 are framework-2; the sequence is IGWVRQMPGKGLEWMGI. The tract at residues 70–77 is complementarity-determining-2; that stretch reads IYPGDSDT. The segment at 78–115 is framework-3; sequence RYSPSFQGQVTISADKSISTAYLQWSSLKASDTAMYYC. A complementarity-determining-3 region spans residues 116-117; that stretch reads AR.

As to quaternary structure, immunoglobulins are composed of two identical heavy chains and two identical light chains; disulfide-linked.

The protein resides in the secreted. It localises to the cell membrane. Its function is as follows. V region of the variable domain of immunoglobulin heavy chains that participates in the antigen recognition. Immunoglobulins, also known as antibodies, are membrane-bound or secreted glycoproteins produced by B lymphocytes. In the recognition phase of humoral immunity, the membrane-bound immunoglobulins serve as receptors which, upon binding of a specific antigen, trigger the clonal expansion and differentiation of B lymphocytes into immunoglobulins-secreting plasma cells. Secreted immunoglobulins mediate the effector phase of humoral immunity, which results in the elimination of bound antigens. The antigen binding site is formed by the variable domain of one heavy chain, together with that of its associated light chain. Thus, each immunoglobulin has two antigen binding sites with remarkable affinity for a particular antigen. The variable domains are assembled by a process called V-(D)-J rearrangement and can then be subjected to somatic hypermutations which, after exposure to antigen and selection, allow affinity maturation for a particular antigen. The chain is Immunoglobulin heavy variable 5-51 from Homo sapiens (Human).